Here is a 711-residue protein sequence, read N- to C-terminus: Hydroperoxide isomerase ALOXE3 (711 aa).

Residues 2-119 enclose the PLAT domain; the sequence is AVYRLCVTTG…TVELRPGTAR (118 aa). The Lipoxygenase domain occupies 119 to 711; sequence RTICQDALPL…PPLIENSVSI (593 aa). Fe cation-binding residues include H408, H413, H588, N592, and I711.

This sequence belongs to the lipoxygenase family. It depends on Fe cation as a cofactor.

It localises to the cytoplasm. The catalysed reaction is a hydroperoxyeicosatetraenoate = a hydroxy-epoxy-eicosatetraenoate. It catalyses the reaction a hydroperoxyeicosatetraenoate = an oxoeicosatetraenoate + H2O. The enzyme catalyses (12R)-hydroperoxy-(5Z,8Z,10E,14Z)-eicosatetraenoate = (8R)-hydroxy-(11R,12R)-epoxy-(5Z,9E,14Z)-eicosatrienoate. It carries out the reaction (12S)-hydroperoxy-(5Z,8Z,10E,14Z)-eicosatetraenoate = (8R)-hydroxy-(11S,12S)-epoxy-(5Z,9E,14Z)-eicosatrienoate. The catalysed reaction is (12S)-hydroperoxy-(5Z,8Z,10E,14Z)-eicosatetraenoate = (10R)-hydroxy-(11S,12S)-epoxy-(5Z,8Z,14Z)-eicosatrienoate. It catalyses the reaction (15S)-hydroperoxy-(5Z,8Z,11Z,13E)-eicosatetraenoate = (13R)-hydroxy-(14S,15S)-epoxy-(5Z,8Z,11Z)-eicosatrienoate. The enzyme catalyses (5S)-hydroperoxy-(6E,8Z,11Z,14Z)-eicosatetraenoate = 7R-hydroxy-5S,6S-epoxy-(8Z,11Z,14Z)-eicosatrienoate. It carries out the reaction (13S)-hydroperoxy-(9Z,11E)-octadecadienoate = 11-hydroxy-(12S,13S)-epoxy-(9Z)-octadecenoate. The catalysed reaction is N-[omega-(9R)-hydroperoxy-(10E,12Z)-octadecadienoyloxy]acyl-beta-D-glucosyl-(1&lt;-&gt;1)-octadecasphing-4E-enine = a N-[omega-(9R,10R)-epoxy-(13R)-hydroxy-(11E)-octadecenoyloxy]acyl-beta-D-glucosyl-(1&lt;-&gt;1)-sphing-4E-enine. It catalyses the reaction a N-[omega-(9R)-hydroperoxy-(10E,12Z)-octadecadienoyloxy]-acylsphin-4E-enine = a N-[omega-(9R,10R)-epoxy-(13R)-hydroxy-(11E)-octadecenoyloxy]-acylsphing-4E-enine. The enzyme catalyses (12R)-hydroperoxy-(5Z,8Z,10E,14Z)-eicosatetraenoate = 12-oxo-(5Z,8Z,10E,14Z)-eicosatetraenoate + H2O. It carries out the reaction (12S)-hydroperoxy-(5Z,8Z,10E,14Z)-eicosatetraenoate = 12-oxo-(5Z,8Z,10E,14Z)-eicosatetraenoate + H2O. The catalysed reaction is (15S)-hydroperoxy-(5Z,8Z,11Z,13E)-eicosatetraenoate = 15-oxo-(5Z,8Z,11Z,13E)-eicosatetraenoate + H2O. It catalyses the reaction (13S)-hydroperoxy-(9Z,11E)-octadecadienoate = 13-oxo-(9Z,11E)-octadecadienoate + H2O. The enzyme catalyses (8S)-hydroperoxy-(5Z,9E,11Z,14Z)-eicosatetraenoate = (10R)-hydroxy-(8S,9S)-epoxy-(5Z,11Z,14Z)-eicosatrienoate. It carries out the reaction (8R)-hydroperoxy-(5Z,9E,11Z,14Z)-eicosatetraenoate = 8-oxo-(5Z,9E,11Z,14Z)-eicosatetraenoate + H2O. The catalysed reaction is (8S)-hydroperoxy-(5Z,9E,11Z,14Z)-eicosatetraenoate = 8-oxo-(5Z,9E,11Z,14Z)-eicosatetraenoate + H2O. Its pathway is lipid metabolism; hydroperoxy eicosatetraenoic acid biosynthesis. The protein operates within lipid metabolism; sphingolipid metabolism. Its function is as follows. Non-heme iron-containing lipoxygenase which is atypical in that it displays a prominent hydroperoxide isomerase activity and a reduced lipoxygenases activity. The hydroperoxide isomerase activity catalyzes the isomerization of hydroperoxides, derived from arachidonic and linoleic acid by ALOX12B, into hepoxilin-type epoxyalcohols and ketones. In presence of oxygen, oxygenates polyunsaturated fatty acids, including arachidonic acid, to produce fatty acid hydroperoxides. In the skin, acts downstream of ALOX12B on the linoleate moiety of esterified omega-hydroxyacyl-sphingosine (EOS) ceramides to produce an epoxy-ketone derivative, a crucial step in the conjugation of omega-hydroxyceramide to membrane proteins. Therefore plays a crucial role in the synthesis of corneocytes lipid envelope and the establishment of the skin barrier to water loss. In parallel, it may have a signaling function in barrier formation through the production of hepoxilins metabolites. Also plays a role in adipocyte differentiation through hepoxilin A3 and hepoxilin B3 production which in turn activate PPARG. Through the production of hepoxilins in the spinal cord, it may regulate inflammatory tactile allodynia. This Rattus norvegicus (Rat) protein is Hydroperoxide isomerase ALOXE3.